Here is a 347-residue protein sequence, read N- to C-terminus: UDP-3-O-acylglucosamine N-acyltransferase (347 aa).

His241 (proton acceptor) is an active-site residue.

It belongs to the transferase hexapeptide repeat family. LpxD subfamily. In terms of assembly, homotrimer.

The enzyme catalyses a UDP-3-O-[(3R)-3-hydroxyacyl]-alpha-D-glucosamine + a (3R)-hydroxyacyl-[ACP] = a UDP-2-N,3-O-bis[(3R)-3-hydroxyacyl]-alpha-D-glucosamine + holo-[ACP] + H(+). It functions in the pathway bacterial outer membrane biogenesis; LPS lipid A biosynthesis. Its function is as follows. Catalyzes the N-acylation of UDP-3-O-acylglucosamine using 3-hydroxyacyl-ACP as the acyl donor. Is involved in the biosynthesis of lipid A, a phosphorylated glycolipid that anchors the lipopolysaccharide to the outer membrane of the cell. The protein is UDP-3-O-acylglucosamine N-acyltransferase of Neisseria gonorrhoeae (strain NCCP11945).